The chain runs to 156 residues: Small ribosomal subunit protein uS7c (156 aa).

It belongs to the universal ribosomal protein uS7 family. As to quaternary structure, part of the 30S ribosomal subunit.

It localises to the plastid. The protein resides in the chloroplast. One of the primary rRNA binding proteins, it binds directly to 16S rRNA where it nucleates assembly of the head domain of the 30S subunit. In Chara vulgaris (Common stonewort), this protein is Small ribosomal subunit protein uS7c (rps7).